The chain runs to 436 residues: MVGFGANRRAGRLPSLVLVVLLVVIVVLAFNYWSISSRHVLLQEEVAELQGQVQRTEVARGRLEKRNSGLLLLVDTHKKQIDQKEADYGRLSSRLQAREGLGKRCEDDKVKLQNNISYQMADIHHLKEQLAELRQEFLRQEDQLQDYRKNNTYLVKRLEYESFQCGQQIKELRAQHEENIKKLADQFLQEQKQEAHKIQSNDGKELDINDQVVPKNIPKVAENVADKNEEPSSNHIPHGKEQIKRGGDAGMPGIEENDLAKVDDLPPALRKPPISVSQHESHQTISHIPTGQPLSPNMPPDSHVNHNGNPGTSKQNPSSPLQRLIPGSNLDSEPRIQTDILKQATKDRVSDFHKLKQSRFFDENESPVDPQHGSKLADYNGDDGNVGEYEADKQAELAYNEEEDGDGGEEDVQDDEERELQMDPADYGKQHFNDVL.

N-acetylmethionine is present on M1. The Cytoplasmic segment spans residues 1-14; that stretch reads MVGFGANRRAGRLP. Residues 15–35 form a helical; Signal-anchor for type II membrane protein membrane-spanning segment; the sequence is SLVLVVLLVVIVVLAFNYWSI. Residues 35–195 adopt a coiled-coil conformation; that stretch reads ISSRHVLLQE…QFLQEQKQEA (161 aa). Residues 36–436 lie on the Lumenal side of the membrane; that stretch reads SSRHVLLQEE…YGKQHFNDVL (401 aa). 2 stretches are compositionally biased toward basic and acidic residues: residues 193 to 207 and 224 to 247; these read QEAHKIQSNDGKELD and VADKNEEPSSNHIPHGKEQIKRGG. The tract at residues 193-436 is disordered; it reads QEAHKIQSND…YGKQHFNDVL (244 aa). Phosphoserine is present on residues S233 and S275. Polar residues-rich tracts occupy residues 275–295 and 305–321; these read SVSQHESHQTISHIPTGQPLS and NHNGNPGTSKQNPSSPL. Phosphoserine occurs at positions 328 and 332. Basic and acidic residues predominate over residues 344–362; sequence ATKDRVSDFHKLKQSRFFD. Position 366 is a phosphoserine (S366). Acidic residues predominate over residues 399–418; sequence YNEEEDGDGGEEDVQDDEER. Residues 426-436 are compositionally biased toward basic and acidic residues; that stretch reads DYGKQHFNDVL.

Belongs to the GOLM family.

It is found in the membrane. The polypeptide is Protein GOLM2 (GOLM2) (Pongo abelii (Sumatran orangutan)).